Consider the following 255-residue polypeptide: Hemin import ATP-binding protein HmuV (255 aa).

The region spanning 2–238 is the ABC transporter domain; the sequence is LRVENLSIRR…EPLRAVFGLE (237 aa). 34–41 contributes to the ATP binding site; it reads GPNGAGKS.

It belongs to the ABC transporter superfamily. Heme (hemin) importer (TC 3.A.1.14.5) family. In terms of assembly, the complex is composed of two ATP-binding proteins (HmuV), two transmembrane proteins (HmuU) and a solute-binding protein (HmuT).

Its subcellular location is the cell inner membrane. In terms of biological role, part of the ABC transporter complex HmuTUV involved in hemin import. Responsible for energy coupling to the transport system. In Pseudomonas aeruginosa (strain ATCC 15692 / DSM 22644 / CIP 104116 / JCM 14847 / LMG 12228 / 1C / PRS 101 / PAO1), this protein is Hemin import ATP-binding protein HmuV.